The sequence spans 104 residues: Large ribosomal subunit protein uL24 (104 aa).

The protein belongs to the universal ribosomal protein uL24 family. Part of the 50S ribosomal subunit.

Functionally, one of two assembly initiator proteins, it binds directly to the 5'-end of the 23S rRNA, where it nucleates assembly of the 50S subunit. Its function is as follows. One of the proteins that surrounds the polypeptide exit tunnel on the outside of the subunit. The chain is Large ribosomal subunit protein uL24 from Corynebacterium diphtheriae (strain ATCC 700971 / NCTC 13129 / Biotype gravis).